Reading from the N-terminus, the 211-residue chain is Large ribosomal subunit protein uL4 (211 aa).

Residues Arg44–Arg94 form a disordered region.

Belongs to the universal ribosomal protein uL4 family. In terms of assembly, part of the 50S ribosomal subunit.

Its function is as follows. One of the primary rRNA binding proteins, this protein initially binds near the 5'-end of the 23S rRNA. It is important during the early stages of 50S assembly. It makes multiple contacts with different domains of the 23S rRNA in the assembled 50S subunit and ribosome. Forms part of the polypeptide exit tunnel. This is Large ribosomal subunit protein uL4 from Leptospira borgpetersenii serovar Hardjo-bovis (strain JB197).